Consider the following 266-residue polypeptide: Mitochondrial intermembrane space import and assembly protein 40 (266 aa).

The transit peptide at 1–28 directs the protein to the mitochondrion; sequence MFRQVSVRALRRAAGRSVCASRAQMVRH. Residues 29–44 lie on the Mitochondrial matrix side of the membrane; the sequence is SSTLGGGKGSYNLDMP. Residues 45 to 61 form a helical; Signal-anchor for type II membrane protein membrane-spanning segment; it reads ALALAAGVTLLAGYMVY. The Mitochondrial intermembrane segment spans residues 62-266; it reads PRAPKAKQAA…AESAKSDEGH (205 aa). The span at 87-98 shows a compositional bias: polar residues; the sequence is ASLQASAPVQAT. Residues 87 to 180 form a disordered region; that stretch reads ASLQASAPVQ…GQQGAYNPDT (94 aa). Composition is skewed to low complexity over residues 130-157 and 165-175; these read AEVG…AAEA and AGEAAQGQQGA. Intrachain disulfides connect cysteine 187–cysteine 189, cysteine 198–cysteine 231, and cysteine 208–cysteine 221. The 45-residue stretch at 195 to 239 folds into the CHCH domain; that stretch reads HGPCGEEFKAAFACFVYSEAEPKGIDCVEKFQVMQDCFRQHPEHY. 2 consecutive short sequence motifs (cx9C motif) follow at residues 198-208 and 221-231; these read CGEEFKAAFAC and CVEKFQVMQDC. Residues 242–266 are disordered; that stretch reads QLESEEQAVRETEAAAESAKSDEGH. Over residues 248-266 the composition is skewed to basic and acidic residues; that stretch reads QAVRETEAAAESAKSDEGH.

Monomer. The cofactor is Cu(2+). Zn(2+) serves as cofactor.

The protein resides in the mitochondrion inner membrane. Functionally, required for the import and folding of small cysteine-containing proteins (small Tim) in the mitochondrial intermembrane space (IMS). Forms a redox cycle with ERV1 that involves a disulfide relay system. Precursor proteins to be imported into the IMS are translocated in their reduced form into the mitochondria. The oxidized form of MIA40 forms a transient intermolecular disulfide bridge with the reduced precursor protein, resulting in oxidation of the precursor protein that now contains an intramolecular disulfide bond and is able to undergo folding in the IMS. The sequence is that of Mitochondrial intermembrane space import and assembly protein 40 (MIA40) from Eremothecium gossypii (strain ATCC 10895 / CBS 109.51 / FGSC 9923 / NRRL Y-1056) (Yeast).